Reading from the N-terminus, the 226-residue chain is Ribonuclease 3 (226 aa).

One can recognise an RNase III domain in the interval 6–128 (INRLQRKLGY…LIGGVFLDSN (123 aa)). Glu41 lines the Mg(2+) pocket. Asp45 is a catalytic residue. Mg(2+)-binding residues include Asp114 and Glu117. Glu117 is a catalytic residue. A DRBM domain is found at 155–225 (DPKTRLQEYL…AEQALKKLEL (71 aa)).

Belongs to the ribonuclease III family. Homodimer. Mg(2+) is required as a cofactor.

The protein resides in the cytoplasm. The catalysed reaction is Endonucleolytic cleavage to 5'-phosphomonoester.. Its function is as follows. Digests double-stranded RNA. Involved in the processing of primary rRNA transcript to yield the immediate precursors to the large and small rRNAs (23S and 16S). Processes some mRNAs, and tRNAs when they are encoded in the rRNA operon. Processes pre-crRNA and tracrRNA of type II CRISPR loci if present in the organism. This Salmonella enteritidis PT4 (strain P125109) protein is Ribonuclease 3.